Reading from the N-terminus, the 431-residue chain is 5-methylthioadenosine/S-adenosylhomocysteine deaminase (431 aa).

Positions 66 and 68 each coordinate Zn(2+). Residues Glu95, Arg147, and His185 each coordinate substrate. Residue His212 coordinates Zn(2+). Positions 215 and 300 each coordinate substrate. Residue Asp300 participates in Zn(2+) binding.

It belongs to the metallo-dependent hydrolases superfamily. MTA/SAH deaminase family. Requires Zn(2+) as cofactor.

It carries out the reaction S-adenosyl-L-homocysteine + H2O + H(+) = S-inosyl-L-homocysteine + NH4(+). The catalysed reaction is S-methyl-5'-thioadenosine + H2O + H(+) = S-methyl-5'-thioinosine + NH4(+). Catalyzes the deamination of 5-methylthioadenosine and S-adenosyl-L-homocysteine into 5-methylthioinosine and S-inosyl-L-homocysteine, respectively. Is also able to deaminate adenosine. The polypeptide is 5-methylthioadenosine/S-adenosylhomocysteine deaminase (Desulfitobacterium hafniense (strain DSM 10664 / DCB-2)).